The sequence spans 379 residues: 3-isopropylmalate dehydrogenase 1 (379 aa).

Substrate-binding residues include R101, R111, R139, and D230. Mg(2+)-binding residues include D230, D254, and D258. Residue 293–305 (GSAPDIAGKGIAN) participates in NAD(+) binding.

It belongs to the isocitrate and isopropylmalate dehydrogenases family. LeuB type 1 subfamily. Homodimer. It depends on Mg(2+) as a cofactor. Mn(2+) is required as a cofactor.

The protein resides in the cytoplasm. The enzyme catalyses (2R,3S)-3-isopropylmalate + NAD(+) = 4-methyl-2-oxopentanoate + CO2 + NADH. The protein operates within amino-acid biosynthesis; L-leucine biosynthesis; L-leucine from 3-methyl-2-oxobutanoate: step 3/4. Its function is as follows. Catalyzes the oxidation of 3-carboxy-2-hydroxy-4-methylpentanoate (3-isopropylmalate) to 3-carboxy-4-methyl-2-oxopentanoate. The product decarboxylates to 4-methyl-2 oxopentanoate. The chain is 3-isopropylmalate dehydrogenase 1 from Bradyrhizobium diazoefficiens (strain JCM 10833 / BCRC 13528 / IAM 13628 / NBRC 14792 / USDA 110).